We begin with the raw amino-acid sequence, 130 residues long: Large ribosomal subunit protein bL12 (130 aa).

It belongs to the bacterial ribosomal protein bL12 family. Homodimer. Part of the ribosomal stalk of the 50S ribosomal subunit. Forms a multimeric L10(L12)X complex, where L10 forms an elongated spine to which 2 to 4 L12 dimers bind in a sequential fashion. Binds GTP-bound translation factors.

Functionally, forms part of the ribosomal stalk which helps the ribosome interact with GTP-bound translation factors. Is thus essential for accurate translation. The protein is Large ribosomal subunit protein bL12 of Thermobifida fusca (strain YX).